The sequence spans 748 residues: Basic juvenile hormone-suppressible protein 1 (748 aa).

A signal peptide spans 1-17 (MRVLVLVASLGLRGSVV).

Belongs to the hemocyanin family. As to expression, fat body, and hemolymph of larvae.

The protein is Basic juvenile hormone-suppressible protein 1 (BJSP-1) of Trichoplusia ni (Cabbage looper).